An 879-amino-acid polypeptide reads, in one-letter code: DNA double-strand break repair Rad50 ATPase (879 aa).

ATP contacts are provided by residues 32 to 38 (NGAGKSS) and Gln-139. 2 coiled-coil regions span residues 184-304 (IELQ…NKIK) and 342-436 (EIKG…NQVK). The region spanning 394–492 (LQKLNEDLNN…LISELNQIIN (99 aa)) is the Zinc-hook domain. Positions 440 and 443 each coordinate Zn(2+). A coiled-coil region spans residues 502-722 (IRNLADYNNL…LITAYDKLKK (221 aa)). 786-791 (LLSGGE) serves as a coordination point for ATP.

The protein belongs to the SMC family. RAD50 subfamily. In terms of assembly, homodimer. Forms a heterotetramer composed of two Mre11 subunits and two Rad50 subunits. Zn(2+) is required as a cofactor.

Its function is as follows. Part of the Rad50/Mre11 complex, which is involved in the early steps of DNA double-strand break (DSB) repair. The complex may facilitate opening of the processed DNA ends to aid in the recruitment of HerA and NurA. Rad50 controls the balance between DNA end bridging and DNA resection via ATP-dependent structural rearrangements of the Rad50/Mre11 complex. The protein is DNA double-strand break repair Rad50 ATPase of Sulfurisphaera tokodaii (strain DSM 16993 / JCM 10545 / NBRC 100140 / 7) (Sulfolobus tokodaii).